Consider the following 744-residue polypeptide: Glucosamine inositolphosphorylceramide transferase 1 (744 aa).

3 helical membrane-spanning segments follow: residues Phe31–Val51, Ser378–Val398, and Leu460–Leu480. Substrate is bound by residues Asn534, Asn558–Arg563, Asp579–Asp581, Arg609, and Phe665–Asp669. Mn(2+) is bound at residue Asp581. A disulfide bridge links Cys667 with Cys718. Asp669 is a catalytic residue.

Belongs to the glycosyltransferase 64 family. Mn(2+) serves as cofactor.

It localises to the membrane. Its pathway is sphingolipid metabolism. Essential protein. Glycosyltransferase that mediates the glycosylation of glycosylinositol phosphorylceramides (GIPCs), the major sphingolipids in the plasma membrane; acts as a HexN(Ac)-specific GIPC sugar transferase. Responsible for the glycosylation of a subgroup of GIPCs found in seeds and pollen that contain GlcNAc and GlcN (GlcN(Ac)). Maybe involved in the maintenance of cell-cell adhesion. The chain is Glucosamine inositolphosphorylceramide transferase 1 from Oryza sativa subsp. indica (Rice).